The following is a 456-amino-acid chain: Phosphomannomutase (456 aa).

The active-site Phosphoserine intermediate is S98. 4 residues coordinate Mg(2+): S98, D246, D248, and D250.

Belongs to the phosphohexose mutase family. The cofactor is Mg(2+).

The enzyme catalyses alpha-D-mannose 1-phosphate = D-mannose 6-phosphate. Its pathway is nucleotide-sugar biosynthesis; GDP-alpha-D-mannose biosynthesis; alpha-D-mannose 1-phosphate from D-fructose 6-phosphate: step 2/2. It functions in the pathway bacterial outer membrane biogenesis; LPS O-antigen biosynthesis. Its function is as follows. Involved in GDP-mannose biosynthesis which serves as the activated sugar nucleotide precursor for mannose residues in cell surface polysaccharides. This enzyme participates in synthesis of the LPS O9 antigen. This is Phosphomannomutase (manB) from Escherichia coli.